The following is a 405-amino-acid chain: Probable tRNA sulfurtransferase (405 aa).

Residues 60-165 (ETIDQRLKLV…QDAIYISNQL (106 aa)) enclose the THUMP domain. Residues 183-184 (ML), 208-209 (HF), Arg265, Gly287, and Gln296 contribute to the ATP site.

This sequence belongs to the ThiI family.

Its subcellular location is the cytoplasm. The catalysed reaction is [ThiI sulfur-carrier protein]-S-sulfanyl-L-cysteine + a uridine in tRNA + 2 reduced [2Fe-2S]-[ferredoxin] + ATP + H(+) = [ThiI sulfur-carrier protein]-L-cysteine + a 4-thiouridine in tRNA + 2 oxidized [2Fe-2S]-[ferredoxin] + AMP + diphosphate. It carries out the reaction [ThiS sulfur-carrier protein]-C-terminal Gly-Gly-AMP + S-sulfanyl-L-cysteinyl-[cysteine desulfurase] + AH2 = [ThiS sulfur-carrier protein]-C-terminal-Gly-aminoethanethioate + L-cysteinyl-[cysteine desulfurase] + A + AMP + 2 H(+). The protein operates within cofactor biosynthesis; thiamine diphosphate biosynthesis. Catalyzes the ATP-dependent transfer of a sulfur to tRNA to produce 4-thiouridine in position 8 of tRNAs, which functions as a near-UV photosensor. Also catalyzes the transfer of sulfur to the sulfur carrier protein ThiS, forming ThiS-thiocarboxylate. This is a step in the synthesis of thiazole, in the thiamine biosynthesis pathway. The sulfur is donated as persulfide by IscS. The sequence is that of Probable tRNA sulfurtransferase from Lactobacillus johnsonii (strain CNCM I-12250 / La1 / NCC 533).